The primary structure comprises 917 residues: MLX-interacting protein (917 aa).

Positions M1–R72 are disordered. The residue at position 2 (A2) is an N-acetylalanine. A phosphoserine mark is found at S9, S33, and S39. Residues P27 to E37 are compositionally biased toward acidic residues. Low complexity predominate over residues A47–A57. A required for cytoplasmic localization region spans residues R73 to D327. The interval N322–P445 is transactivation domain. Disordered stretches follow at residues L347 to T402 and S632 to K711. Polar residues predominate over residues L378 to A388. Residues S632–S643 show a composition bias toward low complexity. S667 carries the post-translational modification Phosphoserine. The span at V670–A685 shows a compositional bias: polar residues. Low complexity predominate over residues S686–S704. Residues K717–L767 form the bHLH domain. The tract at residues L767–L788 is leucine-zipper. Positions W830 to V879 are mediates heterotypic interactions between MLXIP and MLX and is required for cytoplasmic localization. The disordered stretch occupies residues S897 to S917.

Efficient DNA binding requires dimerization with another bHLH protein. Binds DNA as a homodimer or a heterodimer with MLX/TCFL4.

It localises to the cytoplasm. Its subcellular location is the nucleus. The protein localises to the mitochondrion outer membrane. Binds DNA as a heterodimer with MLX/TCFL4 and activates transcription. Binds to the canonical E box sequence 5'-CACGTG-3'. Plays a role in transcriptional activation of glycolytic target genes. Involved in glucose-responsive gene regulation. Regulates transcription in response to changes in cellular carbohydrate abundance such as occurs during fasting to feeding metabolic transition. Refeeding stimulates MLXIPL/ChREBP transcription factor, leading to increased BCKDK to PPM1K expression ratio, phosphorylation and activation of ACLY that ultimately results in the generation of malonyl-CoA and oxaloacetate immediate substrates of de novo lipogenesis and gluconeogenesis, respectively. This Mus musculus (Mouse) protein is MLX-interacting protein.